The primary structure comprises 498 residues: MRINPTTSSPGVSTLEEKNLGRIVQIIGPVLDVAFPPGKMPNIYNALVVKGRDTVGQQINVTCEVQQLLGNNRVRAVAMSATDGLMRGMEVIDTGAPLSVPVGGATLGRIFNVLGEPVDNLGPVDTRTTSPIHRSAPAFIQLDTKLSIFETGIKVVDLLAPYRRGGKIGLFGGAGVGKTVLIMELINNIAKAHGGVSVFGGVGERTREGNDLYMEMKESGVINEQNIAESKVALVYGQMNEPPGARMRVGLTALTMAEYFRDVNEQDVLLFIDNIFRFVQAGSEVSALLGRMPSAVGYQPTLSTEMGSLQERITSTKEGSITSIQAVYVPADDLTDPAPATTFAHLDATTVLSRGLAAKGIYPAVDPLDSTSTMLQPRIVGEEHYETAQRVKQTSQRYKELQDIIAILGLDELSEEDRLTVARARKIERFLSQPFFVAEVFTGSPGKYVGLAETIRGFQLILSGELDGLPEQAFYLVGNIDEATAKAMNLEVESKLKK.

Residue 172 to 179 participates in ATP binding; that stretch reads GGAGVGKT.

It belongs to the ATPase alpha/beta chains family. As to quaternary structure, F-type ATPases have 2 components, CF(1) - the catalytic core - and CF(0) - the membrane proton channel. CF(1) has five subunits: alpha(3), beta(3), gamma(1), delta(1), epsilon(1). CF(0) has four main subunits: a(1), b(1), b'(1) and c(9-12).

The protein localises to the plastid. Its subcellular location is the chloroplast thylakoid membrane. The catalysed reaction is ATP + H2O + 4 H(+)(in) = ADP + phosphate + 5 H(+)(out). In terms of biological role, produces ATP from ADP in the presence of a proton gradient across the membrane. The catalytic sites are hosted primarily by the beta subunits. This Liriodendron tulipifera (Tuliptree) protein is ATP synthase subunit beta, chloroplastic.